Reading from the N-terminus, the 155-residue chain is FUN14 domain-containing protein 1 (155 aa).

Residues 1–47 (MASRNPPPQDYESDDESYEVLDLTEYARRHHWWNRVFGHSSGPMVEK) lie on the Cytoplasmic side of the membrane. S13 and S17 each carry phosphoserine. Residue Y18 is modified to Phosphotyrosine; by SRC. Positions 18 to 21 (YEVL) match the YXXL motif. A helical membrane pass occupies residues 48 to 68 (YSVATQIVMGGVTGWCAGFLF). The Mitochondrial intermembrane portion of the chain corresponds to 69–74 (QKVGKL). The chain crosses the membrane as a helical span at residues 75–95 (AATAVGGGFLLLQVASHSGYV). Topologically, residues 96–133 (QIDWKRVEKDVNKAKRQIKKRANKAAPEINNIIEEATD) are cytoplasmic. A Glycyl lysine isopeptide (Lys-Gly) (interchain with G-Cter in ubiquitin) cross-link involves residue K119. The helical transmembrane segment at 134-154 (FIKQNIVISSGFVGGFLLGLA) threads the bilayer. S155 is a topological domain (mitochondrial intermembrane).

The protein belongs to the FUN14 family. As to quaternary structure, interacts (via YXXL motif) with MAP1 LC3 family proteins MAP1LC3A, MAP1LC3B and GABARAP. Interacts with DNM1L/DPR1. Interacts with GPX4. Phosphorylation at Ser-13 by CK2 and at Tyr-18 by SRC inhibits activation of mitophagy. Following hypoxia, dephosphorylated at Tyr-18, leading to interaction with MAP1 LC3 family proteins and triggering mitophagy. Dephosphorylation is mediated by PGAM5. Phosphorylated by ULK1 at Ser-17 which enhances FUNDC1 binding to LC3. In terms of processing, ubiquitinated on Lys-119. Deubiquitinated by USP19; leading to hypoxia-induced DRP1 oligomerization and GTPase activity.

The protein resides in the mitochondrion outer membrane. Functionally, integral mitochondrial outer-membrane protein that mediates the formation of mitochondria-associated endoplasmic reticulum membranes (MAMs). In turn, mediates angiogenesis and neoangiogenesis through interference with intracellular Ca(2+) communication and regulation of the vascular endothelial growth factor receptor KDR/VEGFR2 expression at both mRNA and protein levels. Also acts as an activator of hypoxia-induced mitophagy, an important mechanism for mitochondrial quality and homeostasis, by interacting with and recruiting LC3 protein family to mitochondria. Mechanistically, recruits DRP1 at ER-mitochondria contact sites leading to DRP1 oligomerization and GTPase activity to facilitate mitochondrial fission during hypoxia. Additionally, plays a role in hepatic ferroptosis by interacting directly with glutathione peroxidase/GPX4 to facilitate its recruitment into mitochondria through TOM/TIM complex where it is degraded by mitophagy. This Mus musculus (Mouse) protein is FUN14 domain-containing protein 1 (Fundc1).